The sequence spans 147 residues: Large ribosomal subunit protein bL9 (147 aa).

It belongs to the bacterial ribosomal protein bL9 family.

In terms of biological role, binds to the 23S rRNA. This Flavobacterium psychrophilum (strain ATCC 49511 / DSM 21280 / CIP 103535 / JIP02/86) protein is Large ribosomal subunit protein bL9.